Reading from the N-terminus, the 275-residue chain is Large ribosomal subunit protein uL2 (275 aa).

2 disordered regions span residues 222-243 (GSVM…PIGR) and 256-275 (GGKT…KRKP).

It belongs to the universal ribosomal protein uL2 family. Part of the 50S ribosomal subunit. Forms a bridge to the 30S subunit in the 70S ribosome.

Its function is as follows. One of the primary rRNA binding proteins. Required for association of the 30S and 50S subunits to form the 70S ribosome, for tRNA binding and peptide bond formation. It has been suggested to have peptidyltransferase activity; this is somewhat controversial. Makes several contacts with the 16S rRNA in the 70S ribosome. In Syntrophomonas wolfei subsp. wolfei (strain DSM 2245B / Goettingen), this protein is Large ribosomal subunit protein uL2.